The following is a 415-amino-acid chain: MKLKSLLLRYYPPGIMLEYEKHGELKTKSIDLLDLGPSTDVSALVEEIQKAEPLLTASRTEQVKLLIQRLQEKLGQNSNHTFYLFKVLKAHILPLTNVALNKSGSCFITGSYDRTCKLWDTASGEELNTLEGHRNVVYAIAFNNPYGDKIATGSFDKTCKLWSVETGKCYHTFRGHTAEIVCLSFNPQSTLVATGSMDTTAKLWDIQNGEEVYTLRGHSAEIISLSFNTSGDRIITGSFDHTVVVWDADTGRKVNILIGHCAEISSASFNWDCSLILTGSMDKTCKLWDATNGKCVATLTGHDDEILDSCFDYTGKLIATASADGTARIFSAATRKCIAKLEGHEGEISKISFNPQGNHLLTGSSDKTARIWDAQTGQCLQVLEGHTDEIFSCAFNYKGNIVITGSKDNTCRIWR.

WD repeat units follow at residues 90–129 (AHILPLTNVALNKSGSCFITGSYDRTCKLWDTASGEELNT), 132–174 (GHRN…HTFR), 175–214 (GHTAEIVCLSFNPQSTLVATGSMDTTAKLWDIQNGEEVYT), 217–256 (GHSAEIISLSFNTSGDRIITGSFDHTVVVWDADTGRKVNI), 259–298 (GHCAEISSASFNWDCSLILTGSMDKTCKLWDATNGKCVAT), 301–340 (GHDDEILDSCFDYTGKLIATASADGTARIFSAATRKCIAK), 343–384 (GHEG…QVLE), and 386–415 (HTDEIFSCAFNYKGNIVITGSKDNTCRIWR).

Belongs to the WD repeat WDR69 family. As to quaternary structure, interacts with IFT46.

It localises to the cytoplasm. Its subcellular location is the cytoskeleton. The protein resides in the flagellum basal body. The protein localises to the flagellum axoneme. Required for axonemal dynein assembly and ciliary motility in ciliated organs, including Kupffer's vesicle, during embryogenesis. Facilitates the onset of robust cilia motility during development. The protein is Dynein assembly factor with WD repeat domains 1 of Homo sapiens (Human).